We begin with the raw amino-acid sequence, 348 residues long: Methylthioribose-1-phosphate isomerase (348 aa).

Residues R54 to A56, R96, and Q199 each bind substrate. D240 (proton donor) is an active-site residue. Position 250-251 (N250–K251) interacts with substrate.

It belongs to the eIF-2B alpha/beta/delta subunits family. MtnA subfamily.

The catalysed reaction is 5-(methylsulfanyl)-alpha-D-ribose 1-phosphate = 5-(methylsulfanyl)-D-ribulose 1-phosphate. The protein operates within amino-acid biosynthesis; L-methionine biosynthesis via salvage pathway; L-methionine from S-methyl-5-thio-alpha-D-ribose 1-phosphate: step 1/6. In terms of biological role, catalyzes the interconversion of methylthioribose-1-phosphate (MTR-1-P) into methylthioribulose-1-phosphate (MTRu-1-P). The chain is Methylthioribose-1-phosphate isomerase from Thioalkalivibrio sulfidiphilus (strain HL-EbGR7).